Reading from the N-terminus, the 192-residue chain is Fe/S biogenesis protein NfuA (192 aa).

Residues cysteine 149 and cysteine 152 each contribute to the [4Fe-4S] cluster site.

This sequence belongs to the NfuA family. In terms of assembly, homodimer. The cofactor is [4Fe-4S] cluster.

In terms of biological role, involved in iron-sulfur cluster biogenesis. Binds a 4Fe-4S cluster, can transfer this cluster to apoproteins, and thereby intervenes in the maturation of Fe/S proteins. Could also act as a scaffold/chaperone for damaged Fe/S proteins. The polypeptide is Fe/S biogenesis protein NfuA (Colwellia psychrerythraea (strain 34H / ATCC BAA-681) (Vibrio psychroerythus)).